The chain runs to 310 residues: Homocysteine S-methyltransferase (310 aa).

Positions 1–310 constitute a Hcy-binding domain; it reads MSQNNPLRAL…ADIAALKARS (310 aa). Residues C229, C295, and C296 each contribute to the Zn(2+) site.

In terms of assembly, monomer. The cofactor is Zn(2+).

It catalyses the reaction S-methyl-L-methionine + L-homocysteine = 2 L-methionine + H(+). Catalyzes methyl transfer from S-methylmethionine or S-adenosylmethionine (less efficient) to homocysteine, selenohomocysteine and less efficiently selenocysteine. The sequence is that of Homocysteine S-methyltransferase (mmuM) from Escherichia coli (strain K12).